Reading from the N-terminus, the 140-residue chain is Putative nickel-responsive regulator 3 (140 aa).

The Ni(2+) site is built by H81, H92, H94, and C100.

This sequence belongs to the transcriptional regulatory CopG/NikR family. Requires Ni(2+) as cofactor.

Transcriptional regulator. The polypeptide is Putative nickel-responsive regulator 3 (Methanosarcina mazei (strain ATCC BAA-159 / DSM 3647 / Goe1 / Go1 / JCM 11833 / OCM 88) (Methanosarcina frisia)).